The following is a 33-amino-acid chain: uncharacterized protein (33 aa).

This is an uncharacterized protein from Saccharomyces cerevisiae (strain ATCC 204508 / S288c) (Baker's yeast).